Consider the following 387-residue polypeptide: uncharacterized protein (387 aa).

Residues 5-25 (FVLFSFPFLLLSSMLIFYQTT) traverse the membrane as a helical segment.

This sequence belongs to the LicD transferase family.

It is found in the membrane. This is an uncharacterized protein from Caenorhabditis elegans.